We begin with the raw amino-acid sequence, 239 residues long: tRNA (guanine-N(7)-)-methyltransferase (239 aa).

S-adenosyl-L-methionine-binding residues include E69, E94, D121, and D144. D144 is a catalytic residue. Residue K148 participates in substrate binding. The interaction with RNA stretch occupies residues 150 to 155 (RHNKRR). Substrate contacts are provided by residues D180 and 217 to 220 (TKFE).

This sequence belongs to the class I-like SAM-binding methyltransferase superfamily. TrmB family. As to quaternary structure, monomer.

The enzyme catalyses guanosine(46) in tRNA + S-adenosyl-L-methionine = N(7)-methylguanosine(46) in tRNA + S-adenosyl-L-homocysteine. It participates in tRNA modification; N(7)-methylguanine-tRNA biosynthesis. In terms of biological role, catalyzes the formation of N(7)-methylguanine at position 46 (m7G46) in tRNA. The sequence is that of tRNA (guanine-N(7)-)-methyltransferase from Escherichia coli O6:H1 (strain CFT073 / ATCC 700928 / UPEC).